Reading from the N-terminus, the 709-residue chain is Polyribonucleotide nucleotidyltransferase (709 aa).

Mg(2+) contacts are provided by aspartate 489 and aspartate 495. In terms of domain architecture, KH spans 556–615 (PKIDMIKIDVDKIKVVIGKGGETIDKIIAETGVKIDIDEEGNVSIFSSDQAAIDRTKDII). The S1 motif domain occupies 625–693 (GEVYHAKVVR…DKGRVDASMK (69 aa)).

It belongs to the polyribonucleotide nucleotidyltransferase family. Mg(2+) serves as cofactor.

Its subcellular location is the cytoplasm. The catalysed reaction is RNA(n+1) + phosphate = RNA(n) + a ribonucleoside 5'-diphosphate. Its function is as follows. Involved in mRNA degradation. Catalyzes the phosphorolysis of single-stranded polyribonucleotides processively in the 3'- to 5'-direction. In Streptococcus agalactiae serotype V (strain ATCC BAA-611 / 2603 V/R), this protein is Polyribonucleotide nucleotidyltransferase.